A 289-amino-acid polypeptide reads, in one-letter code: Ribosomal RNA small subunit methyltransferase A (289 aa).

S-adenosyl-L-methionine-binding residues include Asn21, Leu23, Gly48, Glu69, Asp94, and Asn120.

This sequence belongs to the class I-like SAM-binding methyltransferase superfamily. rRNA adenine N(6)-methyltransferase family. RsmA subfamily.

Its subcellular location is the cytoplasm. The catalysed reaction is adenosine(1518)/adenosine(1519) in 16S rRNA + 4 S-adenosyl-L-methionine = N(6)-dimethyladenosine(1518)/N(6)-dimethyladenosine(1519) in 16S rRNA + 4 S-adenosyl-L-homocysteine + 4 H(+). In terms of biological role, specifically dimethylates two adjacent adenosines (A1518 and A1519) in the loop of a conserved hairpin near the 3'-end of 16S rRNA in the 30S particle. May play a critical role in biogenesis of 30S subunits. The protein is Ribosomal RNA small subunit methyltransferase A of Actinobacillus pleuropneumoniae serotype 5b (strain L20).